A 244-amino-acid chain; its full sequence is Aspartate/glutamate leucyltransferase (244 aa).

It belongs to the R-transferase family. Bpt subfamily.

The protein resides in the cytoplasm. It catalyses the reaction N-terminal L-glutamyl-[protein] + L-leucyl-tRNA(Leu) = N-terminal L-leucyl-L-glutamyl-[protein] + tRNA(Leu) + H(+). The enzyme catalyses N-terminal L-aspartyl-[protein] + L-leucyl-tRNA(Leu) = N-terminal L-leucyl-L-aspartyl-[protein] + tRNA(Leu) + H(+). Functionally, functions in the N-end rule pathway of protein degradation where it conjugates Leu from its aminoacyl-tRNA to the N-termini of proteins containing an N-terminal aspartate or glutamate. The chain is Aspartate/glutamate leucyltransferase from Bordetella parapertussis (strain 12822 / ATCC BAA-587 / NCTC 13253).